The sequence spans 226 residues: Cytidylate kinase (226 aa).

Residue 10–18 (GFSSTGKST) coordinates ATP.

Belongs to the cytidylate kinase family. Type 1 subfamily.

The protein localises to the cytoplasm. The catalysed reaction is CMP + ATP = CDP + ADP. It carries out the reaction dCMP + ATP = dCDP + ADP. This chain is Cytidylate kinase, found in Flavobacterium psychrophilum (strain ATCC 49511 / DSM 21280 / CIP 103535 / JIP02/86).